A 677-amino-acid chain; its full sequence is Pentatricopeptide repeat-containing protein At5g39350 (677 aa).

16 PPR repeats span residues 48–78 (SGHILSTLSVTYALCGHITYARKLFEEMPQS), 79–113 (SLLSYNIVIRMYVREGLYHDAISVFIRMVSEGVKC), 116–146 (DGYTYPFVAKAAGELKSMKLGLVVHGRILRS), 151–181 (DKYVQNALLAMYMNFGKVEMARDVFDVMKNR), 182–216 (DVISWNTMISGYYRNGYMNDALMMFDWMVNESVDL), 217–251 (DHATIVSMLPVCGHLKDLEMGRNVHKLVEEKRLGD), 252–282 (KIEVKNALVNMYLKCGRMDEARFVFDRMERR), 283–317 (DVITWTCMINGYTEDGDVENALELCRLMQFEGVRP), 318–352 (NAVTIASLVSVCGDALKVNDGKCLHGWAVRQQVYS), 353–383 (DIIIETSLISMYAKCKRVDLCFRVFSGASKY), 384–418 (HTGPWSAIIAGCVQNELVSDALGLFKRMRREDVEP), 419–453 (NIATLNSLLPAYAALADLRQAMNIHCYLTKTGFMS), 454–488 (SLDAATGLVHVYSKCGTLESAHKIFNGIQEKHKSK), 489–523 (DVVLWGALISGYGMHGDGHNALQVFMEMVRSGVTP), 524–554 (NEITFTSALNACSHSGLVEEGLTLFRFMLEH), and 560–590 (RSNHYTCIVDLLGRAGRLDEAYNLITTIPFE). The segment at 595–670 (VWGALLAACV…KPGHSTIEIR (76 aa)) is type E motif.

It belongs to the PPR family. PCMP-E subfamily.

The chain is Pentatricopeptide repeat-containing protein At5g39350 (PCMP-E16) from Arabidopsis thaliana (Mouse-ear cress).